The primary structure comprises 358 residues: MRERLLAAERVKAIEWRDGTLRLLDQRLLPQEEVWLDHGSAAEVAKAIRDMVVRGAPAIGISAAYGIVLGARARLARGGDWRTALEEDFRLLADSRPTAVNLFWALNRMRERLERMKEGDRPLAVLEAEAISIHDSDREANLTMAQLGMELIRKQQSSPQNILTHCNTGALATGGFGTALGVIRAAHLEGLVNRIHADETRPWLQGSRLTAWELANEGIPVSLNVDSAAAHLMKTENITWVIVGADRITANGDVANKIGTYQLAVNAMHHGVRFMVVAPSSTIDMNLESGEDIPIEERDGRELLEIGGRRVAAEVDAYNPVFDVTPADLIDAIVTERGVVERPDAERMAALMSRKRLH.

Residues 54-56, arginine 96, and glutamine 205 each bind substrate; that span reads RGA. Aspartate 246 serves as the catalytic Proton donor. Position 256–257 (256–257) interacts with substrate; the sequence is NK.

This sequence belongs to the eIF-2B alpha/beta/delta subunits family. MtnA subfamily.

It carries out the reaction 5-(methylsulfanyl)-alpha-D-ribose 1-phosphate = 5-(methylsulfanyl)-D-ribulose 1-phosphate. It functions in the pathway amino-acid biosynthesis; L-methionine biosynthesis via salvage pathway; L-methionine from S-methyl-5-thio-alpha-D-ribose 1-phosphate: step 1/6. In terms of biological role, catalyzes the interconversion of methylthioribose-1-phosphate (MTR-1-P) into methylthioribulose-1-phosphate (MTRu-1-P). This Pseudomonas paraeruginosa (strain DSM 24068 / PA7) (Pseudomonas aeruginosa (strain PA7)) protein is Methylthioribose-1-phosphate isomerase.